A 51-amino-acid polypeptide reads, in one-letter code: uncharacterized protein (51 aa).

The tract at residues 1–28 is disordered; it reads MQQPQNITTSSISNNNNNNTSLTLQQQQ. The stretch at 13–47 forms a coiled coil; that stretch reads SNNNNNNTSLTLQQQQEQLQQLQIKRKRNLMKQLQ.

This is an uncharacterized protein from Dictyostelium discoideum (Social amoeba).